The chain runs to 388 residues: Alpha-2B adrenergic receptor (388 aa).

The chain crosses the membrane as a helical span at residues 1–25 (AIAAVITFLILFTIFGNALVILAVL). Topologically, residues 26-36 (TSRSLRAPQNL) are cytoplasmic. Residues 37–62 (FLVSLAAADILVATLIIPFSLANELL) traverse the membrane as a helical segment. At 63-72 (GYWYFRRTWC) the chain is on the extracellular side. Cys-72 and Cys-151 are joined by a disulfide. Residues 73-95 (EVYLALDVLFCTSSIVHLCAISL) form a helical membrane-spanning segment. The Cytoplasmic segment spans residues 96 to 117 (DRYWAVSRALEYNSKRTPRXIK). Residues 118 to 140 (CIILTVWLIAAAISLPPLIYKGD) form a helical membrane-spanning segment. Topologically, residues 141-156 (QGPQPRGRPQCKLNQE) are extracellular. A helical transmembrane segment spans residues 157 to 180 (AWYILSSSIGSFFAPCLIMILVYL). The Cytoplasmic portion of the chain corresponds to 181-352 (RIYVIAKRSN…LTREKRFTFV (172 aa)). Residues 193 to 309 (GPRAKGASRE…ASACNPPLQQ (117 aa)) form a disordered region. Residues 239 to 249 (PTGEKEGKTPE) show a composition bias toward basic and acidic residues. A compositionally biased stretch (acidic residues) spans 279–291 (PEEEAEEEEEECE). Residues 292-302 (PQAAPASSASA) show a composition bias toward low complexity. A helical transmembrane segment spans residues 353 to 376 (LAVVIGVFVLCWFPFFFSYSLGAI). Topologically, residues 377–385 (CPQRCKVPH) are extracellular. The chain crosses the membrane as a helical span at residues 386–388 (GLF).

This sequence belongs to the G-protein coupled receptor 1 family. Adrenergic receptor subfamily. ADRA2B sub-subfamily. As to quaternary structure, interacts with RAB26. Interacts with PPP1R9B.

It is found in the cell membrane. In terms of biological role, alpha-2 adrenergic receptors mediate the catecholamine-induced inhibition of adenylate cyclase through the action of G proteins. The protein is Alpha-2B adrenergic receptor (ADRA2B) of Orycteropus afer (Aardvark).